The chain runs to 264 residues: Thymidylate synthase (264 aa).

Arg-21 contacts dUMP. His-51 provides a ligand contact to (6R)-5,10-methylene-5,6,7,8-tetrahydrofolate. Residue 126-127 (RR) coordinates dUMP. Cys-146 (nucleophile) is an active-site residue. Residues 166 to 169 (RSCD), Asn-177, and 207 to 209 (HLY) contribute to the dUMP site. Position 169 (Asp-169) interacts with (6R)-5,10-methylene-5,6,7,8-tetrahydrofolate. Ala-263 provides a ligand contact to (6R)-5,10-methylene-5,6,7,8-tetrahydrofolate.

It belongs to the thymidylate synthase family. Bacterial-type ThyA subfamily. As to quaternary structure, homodimer.

It localises to the cytoplasm. It carries out the reaction dUMP + (6R)-5,10-methylene-5,6,7,8-tetrahydrofolate = 7,8-dihydrofolate + dTMP. The protein operates within pyrimidine metabolism; dTTP biosynthesis. Its function is as follows. Catalyzes the reductive methylation of 2'-deoxyuridine-5'-monophosphate (dUMP) to 2'-deoxythymidine-5'-monophosphate (dTMP) while utilizing 5,10-methylenetetrahydrofolate (mTHF) as the methyl donor and reductant in the reaction, yielding dihydrofolate (DHF) as a by-product. This enzymatic reaction provides an intracellular de novo source of dTMP, an essential precursor for DNA biosynthesis. The protein is Thymidylate synthase of Aeromonas salmonicida (strain A449).